The sequence spans 314 residues: Endolytic peptidoglycan transglycosylase RlpA (314 aa).

An N-terminal signal peptide occupies residues 1-19 (MGWALKKVCFLGVIFLISA). Cys-20 carries N-palmitoyl cysteine lipidation. Cys-20 carries the S-diacylglycerol cysteine lipid modification. The SPOR domain maps to 241 to 314 (SVSGGKFSLQ…YNQNAVLTRE (74 aa)).

It belongs to the RlpA family.

The protein localises to the cell membrane. In terms of biological role, lytic transglycosylase with a strong preference for naked glycan strands that lack stem peptides. This Helicobacter pylori (strain J99 / ATCC 700824) (Campylobacter pylori J99) protein is Endolytic peptidoglycan transglycosylase RlpA.